Reading from the N-terminus, the 1199-residue chain is DNA-directed RNA polymerase subunit beta' (1199 aa).

Residues Cys-60, Cys-62, Cys-75, and Cys-78 each contribute to the Zn(2+) site. Mg(2+) contacts are provided by Asp-449, Asp-451, and Asp-453. The Zn(2+) site is built by Cys-818, Cys-892, Cys-899, and Cys-902.

The protein belongs to the RNA polymerase beta' chain family. As to quaternary structure, the RNAP catalytic core consists of 2 alpha, 1 beta, 1 beta' and 1 omega subunit. When a sigma factor is associated with the core the holoenzyme is formed, which can initiate transcription. Mg(2+) serves as cofactor. Zn(2+) is required as a cofactor.

The catalysed reaction is RNA(n) + a ribonucleoside 5'-triphosphate = RNA(n+1) + diphosphate. Functionally, DNA-dependent RNA polymerase catalyzes the transcription of DNA into RNA using the four ribonucleoside triphosphates as substrates. In Bacillus pumilus (strain SAFR-032), this protein is DNA-directed RNA polymerase subunit beta'.